We begin with the raw amino-acid sequence, 289 residues long: NAD kinase (289 aa).

D63 (proton acceptor) is an active-site residue. Residues 63 to 64 (DG), R68, 138 to 139 (ND), R149, D168, 179 to 184 (TGYSLS), and Q238 each bind NAD(+).

Belongs to the NAD kinase family. The cofactor is a divalent metal cation.

The protein localises to the cytoplasm. It carries out the reaction NAD(+) + ATP = ADP + NADP(+) + H(+). In terms of biological role, involved in the regulation of the intracellular balance of NAD and NADP, and is a key enzyme in the biosynthesis of NADP. Catalyzes specifically the phosphorylation on 2'-hydroxyl of the adenosine moiety of NAD to yield NADP. This is NAD kinase from Gemmatimonas aurantiaca (strain DSM 14586 / JCM 11422 / NBRC 100505 / T-27).